The primary structure comprises 154 residues: Pro-corazonin (154 aa).

An N-terminal signal peptide occupies residues 1–19 (MLRLLLLPLFLFTLSMCMG). Gln-20 is subject to Pyrrolidone carboxylic acid. Asn-30 is modified (asparagine amide). Residues 70–154 (LERCLSQLQR…SAEPNVFGKH (85 aa)) constitute a propeptide that is removed on maturation.

Belongs to the corazonin family. As to expression, expression is restricted to 24 neurons in the larval CNS (8 in the brain and 16 in the ventral nerve cord) and 12-16 neurons in the pars lateralis of the adult brain.

The protein localises to the secreted. Its function is as follows. Cardioactive peptide. Corazonin is probably involved in the physiological regulation of the heart beat. Clock (Clk) and cycle (cyc) proteins negatively regulate Crz transcription in a cell-specific manner. In Drosophila erecta (Fruit fly), this protein is Pro-corazonin (Crz).